The chain runs to 153 residues: Cystatin-9 (153 aa).

Residues 1 to 27 form the signal peptide; sequence MGRQRRCRWAQPWTLLLLLLGPRLLVT.

The protein belongs to the cystatin family.

Its subcellular location is the secreted. Functionally, may play a role in hematopoietic differentiation or inflammation. The chain is Cystatin-9 (CST9) from Bos taurus (Bovine).